The chain runs to 632 residues: Probable potassium transport system protein Kup 3 (632 aa).

A run of 12 helical transmembrane segments spans residues L17–L37, L60–L80, T106–I126, P144–V164, F175–I195, A210–L230, W254–L274, A292–I312, I344–F364, L370–F390, L401–A421, and I426–T446.

It belongs to the HAK/KUP transporter (TC 2.A.72) family.

Its subcellular location is the cell inner membrane. The enzyme catalyses K(+)(in) + H(+)(in) = K(+)(out) + H(+)(out). Its function is as follows. Transport of potassium into the cell. Likely operates as a K(+):H(+) symporter. In Rhizobium etli (strain ATCC 51251 / DSM 11541 / JCM 21823 / NBRC 15573 / CFN 42), this protein is Probable potassium transport system protein Kup 3.